Reading from the N-terminus, the 56-residue chain is UPF0434 protein Ecaj_0131 (56 aa).

This sequence belongs to the UPF0434 family.

The protein is UPF0434 protein Ecaj_0131 of Ehrlichia canis (strain Jake).